Reading from the N-terminus, the 254-residue chain is Large ribosomal subunit protein uL2 (254 aa).

Belongs to the universal ribosomal protein uL2 family.

In Eremothecium gossypii (strain ATCC 10895 / CBS 109.51 / FGSC 9923 / NRRL Y-1056) (Yeast), this protein is Large ribosomal subunit protein uL2 (RPL2).